A 145-amino-acid chain; its full sequence is UPF0735 ACT domain-containing protein CLL_A2896 (145 aa).

The region spanning 69–144 is the ACT domain; it reads TFNLIVKDQT…YVEKIEFVAM (76 aa).

This sequence belongs to the UPF0735 family.

This Clostridium botulinum (strain Eklund 17B / Type B) protein is UPF0735 ACT domain-containing protein CLL_A2896.